A 342-amino-acid polypeptide reads, in one-letter code: Cytochrome f (342 aa).

A signal peptide spans 1-28 (MKKQWIAGAFGLTAALAGLVSVPQSALA). The heme site is built by cysteine 48, cysteine 51, and histidine 52. The chain crosses the membrane as a helical span at residues 305-325 (VTWLVAFLAAAFICQLLLVLK).

It belongs to the cytochrome f family. In terms of assembly, the 4 large subunits of the cytochrome b6-f complex are cytochrome b6, subunit IV (17 kDa polypeptide, PetD), cytochrome f and the Rieske protein, while the 4 small subunits are PetG, PetL, PetM and PetN. The complex functions as a dimer. The cofactor is heme.

Its subcellular location is the cell inner membrane. Component of the cytochrome b6-f complex, which mediates electron transfer between photosystem II (PSII) and photosystem I (PSI), cyclic electron flow around PSI, and state transitions. The sequence is that of Cytochrome f (petA) from Gloeobacter violaceus (strain ATCC 29082 / PCC 7421).